Consider the following 394-residue polypeptide: Probable tRNA sulfurtransferase (394 aa).

Positions 61–168 (DETVATLSRI…PMINIYSEEI (108 aa)) constitute a THUMP domain. ATP is bound by residues 185–186 (LL), 210–211 (YF), Arg267, Gly289, and Gln298.

This sequence belongs to the ThiI family.

Its subcellular location is the cytoplasm. The enzyme catalyses [ThiI sulfur-carrier protein]-S-sulfanyl-L-cysteine + a uridine in tRNA + 2 reduced [2Fe-2S]-[ferredoxin] + ATP + H(+) = [ThiI sulfur-carrier protein]-L-cysteine + a 4-thiouridine in tRNA + 2 oxidized [2Fe-2S]-[ferredoxin] + AMP + diphosphate. The catalysed reaction is [ThiS sulfur-carrier protein]-C-terminal Gly-Gly-AMP + S-sulfanyl-L-cysteinyl-[cysteine desulfurase] + AH2 = [ThiS sulfur-carrier protein]-C-terminal-Gly-aminoethanethioate + L-cysteinyl-[cysteine desulfurase] + A + AMP + 2 H(+). Its pathway is cofactor biosynthesis; thiamine diphosphate biosynthesis. Catalyzes the ATP-dependent transfer of a sulfur to tRNA to produce 4-thiouridine in position 8 of tRNAs, which functions as a near-UV photosensor. Also catalyzes the transfer of sulfur to the sulfur carrier protein ThiS, forming ThiS-thiocarboxylate. This is a step in the synthesis of thiazole, in the thiamine biosynthesis pathway. The sulfur is donated as persulfide by IscS. In Agathobacter rectalis (strain ATCC 33656 / DSM 3377 / JCM 17463 / KCTC 5835 / VPI 0990) (Eubacterium rectale), this protein is Probable tRNA sulfurtransferase.